Consider the following 415-residue polypeptide: Serine hydroxymethyltransferase 3 (415 aa).

(6S)-5,6,7,8-tetrahydrofolate-binding positions include Leu-122 and 126-128 (GHL). Residue Lys-230 is modified to N6-(pyridoxal phosphate)lysine.

Belongs to the SHMT family. As to quaternary structure, homodimer. Requires pyridoxal 5'-phosphate as cofactor.

It is found in the cytoplasm. The catalysed reaction is (6R)-5,10-methylene-5,6,7,8-tetrahydrofolate + glycine + H2O = (6S)-5,6,7,8-tetrahydrofolate + L-serine. It participates in one-carbon metabolism; tetrahydrofolate interconversion. It functions in the pathway amino-acid biosynthesis; glycine biosynthesis; glycine from L-serine: step 1/1. Its function is as follows. Catalyzes the reversible interconversion of serine and glycine with tetrahydrofolate (THF) serving as the one-carbon carrier. This reaction serves as the major source of one-carbon groups required for the biosynthesis of purines, thymidylate, methionine, and other important biomolecules. Also exhibits THF-independent aldolase activity toward beta-hydroxyamino acids, producing glycine and aldehydes, via a retro-aldol mechanism. This Burkholderia lata (strain ATCC 17760 / DSM 23089 / LMG 22485 / NCIMB 9086 / R18194 / 383) protein is Serine hydroxymethyltransferase 3.